Reading from the N-terminus, the 808-residue chain is MTIEEVSGETPPSTPPSSSTPSPSSSTTNAAPLGSSVIPIVNKLQDIFAQLGSQSTIALPQVVVVGSQSSGKSSVLEALVGRDFLPRGNDICTRRPLVLQLLQTKSRANGGSDDEWGEFRHLPETRFYDFSEIRREIEAETNRLVGENKGVADTQIRLKISSPNVLNITLVDLPGITKVPVGDQPSDIEARIRTMILSYIKQDTCLILAVTPANTDLANSDALQIASIVDPDGHRTIGVITKLDIMDKGTDARKLLLGNVVPLRLGYVGVVNRCQEDILLNRTVKEALLAEEKFFRSHPVYHGLADRLGVPQLAKKLNQILVQHIKVLLPDLKSRISNALVATAKEHQSYGELTESRAGQGALLLNFLSKYCEAYSSLLEGKSEEMSTSELSGGARIHYIFQSIFVKSLEEVDPCEDLTDDDIRTAIQNATGPRSALFVPDVPFEVLVRRQISRLLDPSLQCARFIFEELIKISHRCMMNELQRFPVLRKRMDEVIGDFLREGLEPSEAMIGDIIDMEMDYINTSHPNFIGGTKAVEAAMHQVKSSRIPHPVARPKDTVEPDRTSSSTSQVKSRSFLGRQANGIVTDQGVVSADAEKAQPAANASDTRWGIPSIFRGGDTRAVTKDSLLNKPFSEAVEDMSHNLSMIYLKEPPAVLRPTETHSEQEAVEIQITKLLLRSYYDIVRKNIEDSVPKAIMHFLVNHTKRELHNVFIKKLYRENLFEEMLQEPDEIAVKRKRTQETLHVLQQAYRTLDELPLEADSVSAGMSKHQELLTSSKYSTSSSYSASPSTTRRSRRAGDQHQNGYGF.

The segment at 1–31 (MTIEEVSGETPPSTPPSSSTPSPSSSTTNAA) is disordered. A compositionally biased stretch (low complexity) spans 16-28 (PSSSTPSPSSSTT). A Dynamin-type G domain is found at 56–330 (TIALPQVVVV…LVQHIKVLLP (275 aa)). Residues 66 to 73 (GSQSSGKS) form a G1 motif region. Residue 66-73 (GSQSSGKS) participates in GTP binding. Residues 92-94 (CTR) are G2 motif. A G3 motif region spans residues 172 to 175 (DLPG). Residues 172–176 (DLPGI) and 241–244 (TKLD) contribute to the GTP site. A G4 motif region spans residues 241 to 244 (TKLD). Residues 271-274 (VNRC) are G5 motif. Residues 548–578 (IPHPVARPKDTVEPDRTSSSTSQVKSRSFLG) form a disordered region. The span at 554–563 (RPKDTVEPDR) shows a compositional bias: basic and acidic residues. Residues 564 to 575 (TSSSTSQVKSRS) show a composition bias toward low complexity. Residues 670-761 (IQITKLLLRS…TLDELPLEAD (92 aa)) enclose the GED domain. The segment at 774–808 (LTSSKYSTSSSYSASPSTTRRSRRAGDQHQNGYGF) is disordered. A compositionally biased stretch (low complexity) spans 775–792 (TSSKYSTSSSYSASPSTT).

Belongs to the TRAFAC class dynamin-like GTPase superfamily. Dynamin/Fzo/YdjA family. As to quaternary structure, homooligomer. Interacts with ARC5 on peroxisomes and ELM1 on mitochondria. As to expression, ubiquitous. Preferentially expressed in flowers.

The protein resides in the mitochondrion. The protein localises to the peroxisome. In terms of biological role, involved in the control of mitochondrial and peroxisomal division and morphology. In association with PEX11C, PEX11D, PEX11E and FIS1B, is involved in cell cycle-associated constitutive self-replication of preexisting peroxisomes. The protein is Dynamin-related protein 3A (DRP3A) of Arabidopsis thaliana (Mouse-ear cress).